We begin with the raw amino-acid sequence, 203 residues long: Transmembrane protein 269 (203 aa).

Transmembrane regions (helical) follow at residues 60–80, 124–144, and 157–177; these read GLASALLLGVDGLLSGILAII, FILCCMASLMILFMMDQSYYP, and LVYIGGVIMLFFSPLSLSAFY.

The protein localises to the membrane. The protein is Transmembrane protein 269 of Homo sapiens (Human).